Consider the following 706-residue polypeptide: Parasporal crystal protein Cry18Aa (706 aa).

It belongs to the delta endotoxin family.

Its function is as follows. Binds to the brush border membrane vesicles of scarab larvae and somehow damages the gut wall to allow the vegetative cells of P.popilliae to enter the hemolymph. Active on M.melolontha. The sequence is that of Parasporal crystal protein Cry18Aa (cry18Aa) from Paenibacillus popilliae (Bacillus popilliae).